A 147-amino-acid chain; its full sequence is Urease accessory protein UreE (147 aa).

Belongs to the UreE family.

It localises to the cytoplasm. Its function is as follows. Involved in urease metallocenter assembly. Binds nickel. Probably functions as a nickel donor during metallocenter assembly. In Marinomonas sp. (strain MWYL1), this protein is Urease accessory protein UreE.